Reading from the N-terminus, the 692-residue chain is Elongation factor G (692 aa).

Positions Glu-8–Val-283 constitute a tr-type G domain. Residues Ala-17–Thr-24, Asp-81–His-85, and Asn-135–Asp-138 each bind GTP.

The protein belongs to the TRAFAC class translation factor GTPase superfamily. Classic translation factor GTPase family. EF-G/EF-2 subfamily.

The protein localises to the cytoplasm. Catalyzes the GTP-dependent ribosomal translocation step during translation elongation. During this step, the ribosome changes from the pre-translocational (PRE) to the post-translocational (POST) state as the newly formed A-site-bound peptidyl-tRNA and P-site-bound deacylated tRNA move to the P and E sites, respectively. Catalyzes the coordinated movement of the two tRNA molecules, the mRNA and conformational changes in the ribosome. In Caulobacter vibrioides (strain ATCC 19089 / CIP 103742 / CB 15) (Caulobacter crescentus), this protein is Elongation factor G.